Here is a 350-residue protein sequence, read N- to C-terminus: Secreted effector protein PipB2 (350 aa).

4 consecutive Pentapeptide repeat domains span residues 162 to 201, 202 to 241, 247 to 286, and 287 to 326; these read ANLTAENLCDADLSGANLEGAVLFMADCEGANFKGANLSG, TSLGDSNFKNACLEDSIMCGATLDHANLTGANLQHASLLG, CNCSGANMDHTNLSGATLIRADMSGATLQGATIMAAIMED, and AVLTRANLRKASFISTNLDGADLAEANLNNTCFKDCTLTH.

Interacts with the host kinesin light chain (KLC), a subunit of the kinesin-1 motor complex.

It is found in the secreted. It localises to the host membrane. Functionally, effector proteins function to alter host cell physiology and promote bacterial survival in host tissues. Involved in the reorganization of late endosome/lysosome (LE/Lys) compartments in mammalian cells. Necessary and sufficient to link kinesin-1 onto the Salmonella-containing vacuole (SCV) membrane. Required for centrifugal extension of lysosomal glycoprotein-rich membrane tubules, known as Salmonella-induced filaments (Sifs), away from the SCV and toward the cell periphery. Required for virulence, but not for intracellular survival and replication in phagocytic cells. This is Secreted effector protein PipB2 (pipB2) from Salmonella choleraesuis (strain SC-B67).